The sequence spans 251 residues: MNILITNDDGISARGIKTLAEKMSKKHNIIVVAPREQKSASSHSISINIPIKIREEKIEGLDCKAYSLVGTPADCTQAGISLLAKGIDLVISGINRGFNSGTDILYSGTVSAAIEGALYDVPSIAISMDVKWDRDDEDYSKAANWVSKVVDLAEKKYLKKNVVLNINVPNINEEDIKGLKVCKIGKSTYKTEYVLLEEDNDKVYQTSGVRNQVEKDESDLYFLSQGYVTLTPLHFDFTNFKELNEVKKIFE.

A divalent metal cation-binding residues include Asp8, Asp9, Ser39, and Asn95.

The protein belongs to the SurE nucleotidase family. It depends on a divalent metal cation as a cofactor.

Its subcellular location is the cytoplasm. The catalysed reaction is a ribonucleoside 5'-phosphate + H2O = a ribonucleoside + phosphate. In terms of biological role, nucleotidase that shows phosphatase activity on nucleoside 5'-monophosphates. The chain is 5'-nucleotidase SurE from Clostridium botulinum (strain Eklund 17B / Type B).